Here is a 37-residue protein sequence, read N- to C-terminus: Large ribosomal subunit protein bL36c (37 aa).

It belongs to the bacterial ribosomal protein bL36 family.

The protein localises to the plastid. The polypeptide is Large ribosomal subunit protein bL36c (Cuscuta gronovii (Common dodder)).